We begin with the raw amino-acid sequence, 307 residues long: Thymidylate synthase (307 aa).

DUMP is bound by residues Arg26 and 160–161 (RR). Cys180 functions as the Nucleophile in the catalytic mechanism. DUMP contacts are provided by residues 209-212 (RSCD), Asn220, and 250-252 (HIY). Residue Asp212 participates in (6R)-5,10-methylene-5,6,7,8-tetrahydrofolate binding. Ala306 serves as a coordination point for (6R)-5,10-methylene-5,6,7,8-tetrahydrofolate.

The protein belongs to the thymidylate synthase family. Bacterial-type ThyA subfamily. As to quaternary structure, homodimer.

The protein resides in the cytoplasm. The catalysed reaction is dUMP + (6R)-5,10-methylene-5,6,7,8-tetrahydrofolate = 7,8-dihydrofolate + dTMP. The protein operates within pyrimidine metabolism; dTTP biosynthesis. Its function is as follows. Catalyzes the reductive methylation of 2'-deoxyuridine-5'-monophosphate (dUMP) to 2'-deoxythymidine-5'-monophosphate (dTMP) while utilizing 5,10-methylenetetrahydrofolate (mTHF) as the methyl donor and reductant in the reaction, yielding dihydrofolate (DHF) as a by-product. This enzymatic reaction provides an intracellular de novo source of dTMP, an essential precursor for DNA biosynthesis. The sequence is that of Thymidylate synthase from Rhizobium rhizogenes (strain K84 / ATCC BAA-868) (Agrobacterium radiobacter).